We begin with the raw amino-acid sequence, 267 residues long: Zerumbone synthase (267 aa).

An NAD(+)-binding site is contributed by L9–C33. Position 142 (S142) interacts with substrate. Y155 acts as the Proton acceptor in catalysis.

It belongs to the short-chain dehydrogenases/reductases (SDR) family. As to expression, expressed in leaves, stems and rhizomes.

The enzyme catalyses 10-hydroxy-alpha-humulene + NAD(+) = zerumbone + NADH + H(+). In terms of biological role, catalyzes 8-hydroxy-alpha-humulene into zerumbone in presence of NAD. Also converts borneol to camphor in vitro. Zerumbone is a highly promising multi-anticancer agent. In Zingiber zerumbet (Shampoo ginger), this protein is Zerumbone synthase (ZSD1).